Here is a 317-residue protein sequence, read N- to C-terminus: Aspartate carbamoyltransferase catalytic subunit (317 aa).

The carbamoyl phosphate site is built by arginine 66 and threonine 67. Lysine 94 serves as a coordination point for L-aspartate. Carbamoyl phosphate contacts are provided by arginine 116, histidine 144, and glutamine 147. The L-aspartate site is built by arginine 177 and arginine 231. Glycine 272 and proline 273 together coordinate carbamoyl phosphate.

It belongs to the aspartate/ornithine carbamoyltransferase superfamily. ATCase family. As to quaternary structure, heterododecamer (2C3:3R2) of six catalytic PyrB chains organized as two trimers (C3), and six regulatory PyrI chains organized as three dimers (R2).

The enzyme catalyses carbamoyl phosphate + L-aspartate = N-carbamoyl-L-aspartate + phosphate + H(+). It participates in pyrimidine metabolism; UMP biosynthesis via de novo pathway; (S)-dihydroorotate from bicarbonate: step 2/3. Catalyzes the condensation of carbamoyl phosphate and aspartate to form carbamoyl aspartate and inorganic phosphate, the committed step in the de novo pyrimidine nucleotide biosynthesis pathway. The polypeptide is Aspartate carbamoyltransferase catalytic subunit (Rhodopseudomonas palustris (strain BisB18)).